Consider the following 139-residue polypeptide: Aspartate 1-decarboxylase (139 aa).

Residue Ser-25 is the Schiff-base intermediate with substrate; via pyruvic acid of the active site. Ser-25 bears the Pyruvic acid (Ser) mark. Thr-57 provides a ligand contact to substrate. Tyr-58 functions as the Proton donor in the catalytic mechanism. Residue 73-75 coordinates substrate; that stretch reads GAA. Residues 117 to 139 are disordered; that stretch reads LGADPAEPVPGSDQARSPQAVTA. Polar residues predominate over residues 130 to 139; sequence QARSPQAVTA.

This sequence belongs to the PanD family. As to quaternary structure, heterooctamer of four alpha and four beta subunits. It depends on pyruvate as a cofactor. Post-translationally, is synthesized initially as an inactive proenzyme, which is activated by self-cleavage at a specific serine bond to produce a beta-subunit with a hydroxyl group at its C-terminus and an alpha-subunit with a pyruvoyl group at its N-terminus.

It is found in the cytoplasm. The enzyme catalyses L-aspartate + H(+) = beta-alanine + CO2. It participates in cofactor biosynthesis; (R)-pantothenate biosynthesis; beta-alanine from L-aspartate: step 1/1. Functionally, catalyzes the pyruvoyl-dependent decarboxylation of aspartate to produce beta-alanine. This chain is Aspartate 1-decarboxylase, found in Streptomyces avermitilis (strain ATCC 31267 / DSM 46492 / JCM 5070 / NBRC 14893 / NCIMB 12804 / NRRL 8165 / MA-4680).